A 474-amino-acid chain; its full sequence is Gamma-aminobutyric acid receptor subunit beta-2 (474 aa).

The signal sequence occupies residues 1–25; it reads MWRVRKRGYFGIWSFPLIIAAVCAQ. The Extracellular segment spans residues 26-244; that stretch reads SVNDPSNMSL…SFKLKRNIGY (219 aa). Asparagine 32 and asparagine 104 each carry an N-linked (GlcNAc...) asparagine glycan. Tyrosine 121 provides a ligand contact to histamine. A disulfide bridge connects residues cysteine 160 and cysteine 174. The N-linked (GlcNAc...) asparagine glycan is linked to asparagine 173. Histamine-binding positions include 180–181 and threonine 226; that span reads SY. 4-aminobutanoate contacts are provided by tyrosine 181 and threonine 226. 3 consecutive transmembrane segments (helical) span residues 245 to 266, 270 to 292, and 304 to 326; these read FILQ…SFWI, ASAA…NTHL, and AIDM…YALV. Residues 327 to 451 are Cytoplasmic-facing; it reads NYIFFGRGPQ…DLTDVNAIDR (125 aa). At tyrosine 403 the chain carries Phosphotyrosine. A helical membrane pass occupies residues 452 to 473; it reads WSRIFFPVVFSFFNIVYWLYYV.

It belongs to the ligand-gated ion channel (TC 1.A.9) family. Gamma-aminobutyric acid receptor (TC 1.A.9.5) subfamily. GABRB2 sub-subfamily. As to quaternary structure, heteropentamer, formed by a combination of alpha (GABRA1-6), beta (GABRB1-3), gamma (GABRG1-3), delta (GABRD), epsilon (GABRE), rho (GABRR1-3), pi (GABRP) and theta (GABRQ) chains, each subunit exhibiting distinct physiological and pharmacological properties. Interacts with UBQLN1. May interact with KIF21B. Identified in a complex of 720 kDa composed of LHFPL4, NLGN2, GABRA1, GABRB2, GABRG2 and GABRB3. Glycosylated. As to expression, expressed in brain (at protein level), in cerebellar granule cells. Expressed in lungs, in alveolar epithelium.

Its subcellular location is the postsynaptic cell membrane. It localises to the cell membrane. It is found in the cytoplasmic vesicle membrane. It catalyses the reaction chloride(in) = chloride(out). Allosterically activated by benzodiazepines and the anesthetic etomidate. Inhibited by the antagonist bicuculline. Potentiated by histamine. Functionally, beta subunit of the heteropentameric ligand-gated chloride channel gated by gamma-aminobutyric acid (GABA), a major inhibitory neurotransmitter in the brain. GABA-gated chloride channels, also named GABA(A) receptors (GABAAR), consist of five subunits arranged around a central pore and contain GABA active binding site(s) located at the alpha and beta subunit interface(s). When activated by GABA, GABAARs selectively allow the flow of chloride anions across the cell membrane down their electrochemical gradient. Chloride influx into the postsynaptic neuron following GABAAR opening decreases the neuron ability to generate a new action potential, thereby reducing nerve transmission. GABAARs containing alpha-1 and beta-2 or -3 subunits exhibit synaptogenic activity; the gamma-2 subunit being necessary but not sufficient to induce rapid synaptic contacts formation. Extrasynaptic beta-2 receptors contribute to the tonic GABAergic inhibition. Beta-containing GABAARs can simultaneously bind GABA and histamine where histamine binds at the interface of two neighboring beta subunits, which may be involved in the regulation of sleep and wakefulness. This is Gamma-aminobutyric acid receptor subunit beta-2 from Rattus norvegicus (Rat).